A 207-amino-acid polypeptide reads, in one-letter code: Ribonuclease HII (207 aa).

Residues 1–207 (MDVLGIDEAG…ATVEKMKNSQ (207 aa)) form the RNase H type-2 domain. 3 residues coordinate a divalent metal cation: Asp7, Glu8, and Asp105.

It belongs to the RNase HII family. It depends on Mn(2+) as a cofactor. Requires Mg(2+) as cofactor.

The protein resides in the cytoplasm. The catalysed reaction is Endonucleolytic cleavage to 5'-phosphomonoester.. In terms of biological role, endonuclease that specifically degrades the RNA of RNA-DNA hybrids. The sequence is that of Ribonuclease HII from Methanobrevibacter smithii (strain ATCC 35061 / DSM 861 / OCM 144 / PS).